Reading from the N-terminus, the 57-residue chain is Andropin (57 aa).

The N-terminal stretch at 1-23 (MKYFVVLVVLALILAISVGPSDA) is a signal peptide.

It belongs to the andropin family. Ejaculatory duct of adult males.

The protein resides in the secreted. Male-specific peptide with moderate activity against Gram-positive bacteria. This is Andropin (Anp) from Drosophila melanogaster (Fruit fly).